A 206-amino-acid polypeptide reads, in one-letter code: Ras-related protein RABG3e (206 aa).

15 to 22 lines the GTP pocket; sequence GDSGVGKT. An Effector region motif is present at residues 37–45; sequence YKATIGADF. GTP-binding positions include 63-67, 125-128, and 158-159; these read DTAGQ, NKID, and SA. 2 S-geranylgeranyl cysteine lipidation sites follow: C204 and C206. The residue at position 206 (C206) is a Cysteine methyl ester.

The protein belongs to the small GTPase superfamily. Rab family.

It localises to the cell membrane. Its function is as follows. Intracellular vesicle trafficking and protein transport. May play a role in adaptation to stress by recylcing macromolecules in specific cellular compartments. In Arabidopsis thaliana (Mouse-ear cress), this protein is Ras-related protein RABG3e (RABG3E).